The sequence spans 286 residues: General stress protein A (286 aa).

UDP contacts are provided by residues 12–17 and 111–112; these read CADDNY and DC. Residues Asp111, Asp113, and His247 each coordinate Mn(2+). Residue 247-253 participates in UDP binding; the sequence is HFCGGEK.

This sequence belongs to the glycosyltransferase 8 family.

The chain is General stress protein A (gspA) from Bacillus subtilis (strain 168).